A 111-amino-acid polypeptide reads, in one-letter code: Ig kappa chain V-III region CBPC 101 (111 aa).

A framework-1 region spans residues Asp-1–Cys-23. The cysteines at positions 23 and 92 are disulfide-linked. The tract at residues Lys-24–Asn-38 is complementarity-determining-1. The interval Trp-39–Tyr-53 is framework-2. The tract at residues Ala-54–Ser-60 is complementarity-determining-2. Residues Gly-61–Cys-92 form a framework-3 region. The segment at Gln-93–Thr-101 is complementarity-determining-3. The framework-4 stretch occupies residues Phe-102–Lys-111.

The protein is Ig kappa chain V-III region CBPC 101 of Mus musculus (Mouse).